A 79-amino-acid polypeptide reads, in one-letter code: Hematopoietic cell signal transducer (79 aa).

The signal sequence occupies residues 1 to 18 (MVPPGNILFLLLLPVATA). Residues 19 to 35 (QMTPGSCSGCGPLSLPL) lie on the Extracellular side of the membrane. The helical transmembrane segment at 36–56 (LAGLVAADAVVSLLIVVVVFV) threads the bilayer. The Cytoplasmic segment spans residues 57-79 (CARLRSRPTQEDDKIYINMPGRG). Tyr72 is modified (phosphotyrosine). A GRB2 binding site region spans residues 72-74 (YIN). The segment at 72 to 75 (YINM) is PIK3R1 binding site.

Belongs to the DAP10 family. Homodimer; Disulfide-linked. Heterohexamer composed of four subunits of HCST/DAP10 and two subunits of KLRK1. Interacts (via transmembrane domain) with KLRK1 (via transmembrane domain); the interaction is required for KLRK1 NK cell surface and induces NK cell-mediated cytotoxicity. Interacts with PIK3R1 and GRB2. Interacts with CLEC5A. Forms an CLEC5A/TYROBP/HCST trimolecular complex depending almost solely on TYROBP. Interacts with KLRK1. Interacts with CD300H. Post-translationally, phosphorylated; PIK3R1 and GRB2 associate specifically with tyrosine-phosphorylated HCST. O-glycosylated.

It localises to the membrane. Transmembrane adapter protein which associates with KLRK1 to form an activation receptor KLRK1-HCST in lymphoid and myeloid cells; this receptor plays a major role in triggering cytotoxicity against target cells expressing cell surface ligands such as MHC class I chain-related MICA and MICB, and UL16-binding proteins (ULBPs); these ligands are up-regulated by stress conditions and pathological state such as viral infection and tumor transformation. Functions as a docking site for PI3-kinase PIK3R1 and GRB2. Interaction of ULBPs with KLRK1-HCST triggers calcium mobilization and activation of the PIK3R1, MAP2K/ERK, and JAK2/STAT5 signaling pathways. Both PIK3R1 and GRB2 are required for full KLRK1-HCST-mediated activation and ultimate killing of target cells. In NK cells, KLRK1-HCST signaling directly induces cytotoxicity and enhances cytokine production initiated via DAP12/TYROBP-associated receptors. In T-cells, it provides primarily costimulation for TCR-induced signals. KLRK1-HCST receptor plays a role in immune surveillance against tumors and is required for cytolysis of tumors cells; indeed, melanoma cells that do not express KLRK1 ligands escape from immune surveillance mediated by NK cells. This chain is Hematopoietic cell signal transducer (HCST), found in Bos taurus (Bovine).